Consider the following 245-residue polypeptide: E3 ubiquitin-protein ligase RNF138 (245 aa).

Ala-2 is modified (N-acetylalanine). The RING-type zinc-finger motif lies at 18-58; that stretch reads CPVCQEVLKTPVRTTACQHVFCRKCFLTAMRESGAHCPLCR. Positions 86, 89, 101, and 105 each coordinate Zn(2+). The segment at 86-105 adopts a C2HC RNF-type zinc-finger fold; that stretch reads CRCCAKQIKFYRMRHHYKSC. A disordered region spans residues 125–154; it reads QDSVGNSNRSETSTSDNTETYQENTSSSGH. Residue Thr-142 is modified to Phosphothreonine. 2 C2H2-type zinc fingers span residues 157-180 and 187-215; these read FKCPLCQESNFTRQRLLDHCNSNH and VTCPICVSLPWGDPSQITRNFVSHLNQRH. Residues 225–243 enclose the UIM domain; that stretch reads LQLDEETQYQTAVEESFQV.

In terms of assembly, interacts with NLK. Interacts with XRCC5/Ku80. Interacts with RBBP8/CtIP. Post-translationally, auto-ubiquitinated.

It localises to the chromosome. The enzyme catalyses S-ubiquitinyl-[E2 ubiquitin-conjugating enzyme]-L-cysteine + [acceptor protein]-L-lysine = [E2 ubiquitin-conjugating enzyme]-L-cysteine + N(6)-ubiquitinyl-[acceptor protein]-L-lysine.. The protein operates within protein modification; protein ubiquitination. Its function is as follows. E3 ubiquitin-protein ligase involved in DNA damage response by promoting DNA resection and homologous recombination. Recruited to sites of double-strand breaks following DNA damage and specifically promotes double-strand break repair via homologous recombination. Two different, non-exclusive, mechanisms have been proposed. According to a report, regulates the choice of double-strand break repair by favoring homologous recombination over non-homologous end joining (NHEJ): acts by mediating ubiquitination of XRCC5/Ku80, leading to remove the Ku complex from DNA breaks, thereby promoting homologous recombination. According to another report, cooperates with UBE2Ds E2 ubiquitin ligases (UBE2D1, UBE2D2, UBE2D3 or UBE2D4) to promote homologous recombination by mediating ubiquitination of RBBP8/CtIP. Together with NLK, involved in the ubiquitination and degradation of TCF/LEF. Also exhibits auto-ubiquitination activity in combination with UBE2K. May act as a negative regulator in the Wnt/beta-catenin-mediated signaling pathway. The polypeptide is E3 ubiquitin-protein ligase RNF138 (Homo sapiens (Human)).